We begin with the raw amino-acid sequence, 4592 residues long: MVFESVVAEVIDRFLGSFLQEVGKKQLKIGVLNGNVVLKNIEVKPEAFKAFDLPLSIDRGIVGKLTIKVPWTSLKSESVVVHLQDIYILASSSSTNVSSNYSSSDDDSSYHSDDDNSSSNNNNNNNNDSSSSSSNTTSTASQLYDSSSEKFLKFLKLDKKKPKKENSNGDLKSTNTTTNNNGINNSNDKNKNNNNIDSQNDIEFDEESLNELNVEVNGKKKKDGFKEKLITKIINNLQVVIEKVHIRIEERKNNRNIAIGLCLDKLFVQSTDESWNPIFIDTMPTSTTSSNNNNNNNNNNTTSSSSSSSILNKLAKLSDLSIYINHDQEPMKNLPTKDLCQALRDSIPTSKNTLSHHMFLDPLSANLCLKLHQSAGSIQSINKIEIESIIEEIGLCLEPQQYSSLLSILENISEFVNDIKEEKTQNNKSAFESILKKNATIKLNKKDDKKDDKKDDINSSSSSIGSSNSSNNTPTKDKNKEKEKDKEKEKEKEKKKEKEKLKLEEKKKKKEEKGKSKSKDSKKNKIKGIEFEVEPQQLITKSDSSDSLQSLEKPSKELLKQQFYDTIGYVSPTSNSTTTNNSNNNSSSSPNILATSPSNNSLSPMLISKPIQPKRIEKELIMNFQIKTIHVKLLSDEPEKELNKQATLIYGDISNISFSLYKKADVMNLDSLIKSIKLSGLWVQNEQFPDMISSSTISENWLSFQMKMSPILDSSSGVGVGVGGGGSGTTSPLQTIITTNGNGSGSKKKPQSTPKNITILIDVKPMFFVLNSAAILRYLQLITPNHTIDLSGFSSGKKRPLSRNKVTLSIIAQSPTVIIPISSAENYNNQSSSSSSSSQPPPPKPTEETSTTNKPKKQQGISFSENTVAILDLGKISLEMLPSSPIGVNDGNFSPSLPIPSSSSNVEYQNFQISTMNIKSILTKPPTLTGSTTTLKFGKHHPSFKEDNKIETYCNQRTEMDKILFETSLIVHMKKRKSDQPDYENPKVIMNVNFPFVRFYFSPFSFYQIRLFVFQLMSEIQRVEEAFISSFQFKIRSNSTTSPTFNSLNNKPSTLQNNHIDIENGNSSNNNNTDSPSKSKRQWLSTSNSNLSTMVNNLTESTGIGIGKENEIIRKREIVFSSHVVFDDINIIVTNLFNLSTIDVEPILHIKSDQLVSNLKVEKSNQRDTTVIGDYAFNDCNIYKCTNENQRGGTNGHPSYTDDDIVISSNFNKFKSPKYFKNKRKEENEQNEGNTEDDEQEEEEQEKKPIIYGTIFHNKQLVPTYEKLSDIKINLSTSYCNLIPQITGNIIEIIQMIVVVNRKVTQSVQRQLEEQRMRRPPSRFTVNKVLIYISVKGIKSILMLPKLINTTTNTVATQQNNQQYKEEIISRFDMKEVDLEITKLPNRLILDFFVDGFELYDLVNDFNTNLYNKVLSNYDDSNLLLTFKYERISKIALPLVLLDADINRFQISLLPNFLNVLKDFILDLFQFIPGLIKQQKKTNKELTTTTTINDGSNMEKYKKKKGIKINARMEAPLLIIPENQLSRNQFIIDLGLLKINNEFISNQTLSLFHFNLSNVNLKTIQFNNNRFKENLVLNNLRLNVEMTSILVWKDNQNGIGVLPPPRLVLDVNLCDVVFKINQNDIMFLMDRVSNLMLIINSTKSEFLNLKIKQEQQQEQEQQQDEELQKSINSKPPSPKLSLMSPLRKSTTSPFKKFIPSSQQQQQQQQQQQQQQSNSNLNRLVNKLPNQQINQVEEILPIEEAPINKLNYGGSNGRMKLKLNLKIDSVRFYIEEIGSLFYIKDTKFKSDIGFDGYKQSIISIGKIYLFFNQLHQLSFTIPIDKIIQDPNQYEQILSLKDNSVINTLEVNFSTLSNNNNDNNNDNNNSNNSNNNNNTSNGSGNSLFKRMPIQSKENIHPFDSELNLTLRQFQITVSLNFISSILEFATPVIQKVLEFKKNKTATSTPNNNEINSLSNSSIISDMTPLSLSTSSLDNTSISTTTTTTTTTTTTTTTTTTTTSTAKIPTISIGSNRRLKKQNSIVMPLINDNSNKSPTSKSSSSKSSSSKSSKKEQQQEKKSIKVKLVINVESPQIVLMLNEDDAILIDLGKIHIENLFYFKTIKGIDLNYESMEIQLSNLFVEIFQSSSYVGSSFEEFNQNLPDGCGDDSYRNKCHLLEDVSLVVNIDIVDDFQSYSKICSTSNHYNNNNAPLPIQKVNIHCKSVSFNISHQGYQLLLNILINYMNCYKNSLEPILLLKKNFNNNNNNNNNNNNNNNNNNNNNNNNTNIINNSSKKKKKQILIDENGKEIDIKTEITVQLSELRFLMLLNHGMDKVRDQLATLQINDLGANIISIGNKSTSIKCFLRSIRLSDSRVDSGSKFIDLFCSKNITTFQGPLKDSLTNINISGSFNNSSNQEEPLITASIDIDKQLNKLTLDVKIEKPRLHISPTIVFMMVGFFLEPYSKVKLEIKQLFSKTNNNNNNNNNNYNNTNSNNNNNQEEEEKDSISTKKKKIISLKTNIKKLKILLVENPNSEVSNLVIVKMSIDASFDETMNGSSRIIGGSIKNFQMFSFRHSIANVSSSRAASLIDPVTFDFGCNLLLIKSTCPSIEKSNLLIDVNANIDQFNLFLSYHDILLIALIIGQLKKEFPKLSKSSKKSTTTTTTLTQKKLKNEKMINNVLTVKFNSPQFGLTLVNDYMDQNLPLIDLSFYRLDLLIQGTIGDEIKVTVDSKIVMDYFNINKMAFEPLIENWDIQLQMIKLNNQNSPNKPATSIQLSSNQFLNINASYGFAHSLLSTYHSIQYDLSTTLPIIMGLFKTKPEFSTFQLSSSPSLSSTQQPTRVFSPPTISTNLVGGGGSGGFKKSNSSSPLIRSSTIDSLNLAVSTSNNPNGSGYNNSNNNNGGGLSPDIILPISSTNRIRSGSLSQNPLGSVSTLVTSPNLTSNRLGFNTSPLLSQQQLKQQQQQQQLFNNSTLLRPIIQPLPATVRSSPLLQTISIRKLTSSFHPYWIINKTGVNLEYTVRVLSGEQKGKKKSTSTSTSPTLSSQPSSSSSSSSQYTHASFFLENEQKQPISIENSKSLLTAKKTRDFRGFKDESLDQGPHITIKLSNHNKNVKNFVNNSVVNSNSSGYNSSSPSPSSSSSPSSSSSNPIPIGRVGYRLIQVGGKKLIFEVGWNEDGSKVITVRSNVLLKNTTTMNLEVKLINNQINTSNGGSLSSNNNNTPKEIKKILFPNEELPVPLQYINSGKYLSILPIGDSGEEFKHSNPFNDLIALDDNDIHSLYKILTCPKIIPKSPQIHMKNNNNSNGNNNNITPPTYNNVKLILLNSNYEKCVINSTDNSSVNDEINTEQTLANLLPNEINLRNDKSKLLRSTISKLPTSPQTSSSSSPPPATTTTSTTTKRTTINSTMSSFNNIYSQNIIKILSPLVIENLLPCKIELTLYEGDIPLESSTLESCQSVPFYTQDPRSSLYVKISGIPGFVDQKHLIVDCDRNNGSNGNKPIIKSKIKLEDPNKILKPLNIMISNREDQVEGVRKLALYSVYWIINKTGLPMIFEKPNFIPMLFADKESKIPQMIAKSKNSLKIEQGRKSKKQQQQHRHNHCTIDTMILYSSDLLYIKVPNSDWSNVFSLETVGTDGIIHCFSNTNSNNSTNHHQDPFYSSTFNNSSNDNINNGNSNNNTSNSLSPPSSSSSINLSKLKSNSDNREYNFRASISMGKNKLQRTKMVTINFQYIFINKSSRRMLYRQIGQSYRIESIEPGESKPFHWPNRHGEKLIQIKFDDDYYDWSGSFTIDDLAELTVKQRSLNLMEVPKPYLGRVDIKDNDTHTSIHFYDQDTEYSPFRIENQIPRSIKFYQIGTSIIDILPPYQSIDYIWDELLGTKILRLEISSTTTTTTTTTTNSTNDINNDNNNNNNQYIENHSTFESSYSSSSVILDCNIMKIKNFKPIKIGTNTIYSFMKVDGPTRVLVLSYDQPKDDSSSELSQTVENCKLDLQLSLPRIGVSLIDHNSKELIYLSLNDISLSFSLSNIFSRFELIVTNMQIDNQLMNTDYPVLFYHTNNSNNEEQDPKPFLHFSFIKNEEKKGLKYFELLSLLIQEVNLMLDDSILASIIETITKIKQLDKNFKKHKKNQQLQQNPQQQQPQQQNNEIQNNPINSPFILNDEKSKIQLLNDIEPISSDPLLLPTSNSAISSNNNNNNNNLTKKKKKKSMIYIKLLLLNPIKVILSFSFVRDGFVGHSNSDFVGILLEVVGVSFGLDRTPLCLNALILEHPFLSERLFASRIKSHYTMQSLNQLYKVIGSSDNIGNPVGLFNHIGTGVKDFFYEPALGLITSPKDFGKGLAKGSISLVKNSVYGLFNTLSKLSNTVGKGVAILSFDDQYLRNRQRSRQKKAKHLGEGVVYGFKSLGKGVIDGVTGVVTKPIEGAIKGSIEGFAKGMAQGVVGVAVKPVVGVFDLVTMTTEGIRNTTNLFKDTTRMRPPRCFGTDNLLVEYNFEQSEGHYILETTFKGRFKNSDTYIIHFNNGGVKNYITLITNLRILLVKQIKNSYSFRWSSTFENIKSCEITPDGLLLHFEHLQRIKSVDYRSQHCIHITDPDQLSQLYLIIKEQILKIKK.

In terms of domain architecture, Chorein N-terminal spans 3-102 (FESVVAEVID…SSTNVSSNYS (100 aa)). Disordered regions lie at residues 95–142 (TNVS…TASQ), 157–199 (LDKK…IDSQ), 286–307 (STTSSNNNNNNNNNNTTSSSSS), 445–529 (KKDD…IKGI), 574–605 (SNSTTTNNSNNNSSSSPNILATSPSNNSLSPM), 826–861 (NYNNQSSSSSSSSQPPPPKPTEETSTTNKPKKQQGI), 1040–1083 (TTSP…KRQW), 1219–1249 (YFKNKRKEENEQNEGNTEDDEQEEEEQEKKP), 1655–1717 (QQQE…QQSN), 1855–1886 (SNNNNDNNNDNNNSNNSNNNNNTSNGSGNSLF), 1971–2001 (TSSLDNTSISTTTTTTTTTTTTTTTTTTTTS), 2025–2056 (PLINDNSNKSPTSKSSSSKSSSSKSSKKEQQQ), and 2245–2270 (NNNNNNNNNNNNNNNNNNNNNTNIIN). Composition is skewed to low complexity over residues 117 to 139 (SSSNNNNNNNNDSSSSSSNTTST) and 172 to 199 (KSTNTTTNNNGINNSNDKNKNNNNIDSQ). The stretch at 437 to 517 (KNATIKLNKK…KKKEEKGKSK (81 aa)) forms a coiled coil. Over residues 445–457 (KKDDKKDDKKDDI) the composition is skewed to basic and acidic residues. The segment covering 458-474 (NSSSSSIGSSNSSNNTP) has biased composition (low complexity). Residues 475–529 (TKDKNKEKEKDKEKEKEKEKKKEKEKLKLEEKKKKKEEKGKSKSKDSKKNKIKGI) are compositionally biased toward basic and acidic residues. Over residues 574–591 (SNSTTTNNSNNNSSSSPN) the composition is skewed to low complexity. Over residues 592–603 (ILATSPSNNSLS) the composition is skewed to polar residues. The segment covering 829–838 (NQSSSSSSSS) has biased composition (low complexity). Residues 1040-1059 (TTSPTFNSLNNKPSTLQNNH) are compositionally biased toward polar residues. Low complexity predominate over residues 1064–1076 (NGNSSNNNNTDSP). Acidic residues predominate over residues 1234–1244 (NTEDDEQEEEE). 2 stretches are compositionally biased toward low complexity: residues 1669–1689 (KSINSKPPSPKLSLMSPLRKS) and 1702–1715 (QQQQQQQQQQQQQQ). The segment covering 2037-2048 (SKSSSSKSSSSK) has biased composition (low complexity). A TPR 1 repeat occupies 2321 to 2354 (TLQINDLGANIISIGNKSTSIKCFLRSIRLSDSR). 7 disordered regions span residues 2456–2489 (KTNNNNNNNNNNYNNTNSNNNNNQEEEEKDSIST), 2862–2882 (AVSTSNNPNGSGYNNSNNNNG), 3006–3035 (GEQKGKKKSTSTSTSPTLSSQPSSSSSSSS), 3106–3129 (NSSGYNSSSPSPSSSSSPSSSSSN), 3356–3384 (KLPTSPQTSSSSSPPPATTTTSTTTKRTT), 3560–3580 (NSLKIEQGRKSKKQQQQHRHN), and 3630–3679 (STNH…SKLK). 3 stretches are compositionally biased toward low complexity: residues 2458–2478 (NNNNNNNNNNYNNTNSNNNNN), 2864–2880 (STSNNPNGSGYNNSNNN), and 3015–3035 (TSTSTSPTLSSQPSSSSSSSS). Over residues 3358-3384 (PTSPQTSSSSSPPPATTTTSTTTKRTT) the composition is skewed to low complexity. A compositionally biased stretch (basic residues) spans 3569–3580 (KSKKQQQQHRHN). A compositionally biased stretch (low complexity) spans 3640-3679 (SSTFNNSSNDNINNGNSNNNTSNSLSPPSSSSSINLSKLK). A TPR 2 repeat occupies 3789 to 3822 (EVPKPYLGRVDIKDNDTHTSIHFYDQDTEYSPFR). Low complexity-rich tracts occupy residues 3872-3894 (TTTTTTTTNSTNDINNDNNNNNN) and 4111-4135 (QQLQQNPQQQQPQQQNNEIQNNPIN). 2 disordered regions span residues 3872–3897 (TTTTTTTTNSTNDINNDNNNNNNQYI) and 4105–4135 (KKHKKNQQLQQNPQQQQPQQQNNEIQNNPIN).

It localises to the membrane. In terms of biological role, mediates the transfer of lipids between membranes at organelle contact sites. This Dictyostelium discoideum (Social amoeba) protein is Intermembrane lipid transfer protein vps13D (vps13D).